Consider the following 204-residue polypeptide: Guanylate kinase (204 aa).

The Guanylate kinase-like domain occupies 5–184 (GLLIVLSGPS…ACDKIKAIVL (180 aa)). 12 to 19 (GPSGVGKG) is an ATP binding site.

It belongs to the guanylate kinase family.

It is found in the cytoplasm. The enzyme catalyses GMP + ATP = GDP + ADP. Functionally, essential for recycling GMP and indirectly, cGMP. This Bacillus subtilis (strain 168) protein is Guanylate kinase (gmk).